The following is a 250-amino-acid chain: 5-oxoprolinase subunit A (250 aa).

It belongs to the LamB/PxpA family. In terms of assembly, forms a complex composed of PxpA, PxpB and PxpC.

It catalyses the reaction 5-oxo-L-proline + ATP + 2 H2O = L-glutamate + ADP + phosphate + H(+). Catalyzes the cleavage of 5-oxoproline to form L-glutamate coupled to the hydrolysis of ATP to ADP and inorganic phosphate. The sequence is that of 5-oxoprolinase subunit A from Thermus thermophilus (strain ATCC BAA-163 / DSM 7039 / HB27).